The primary structure comprises 89 residues: uncharacterized protein (89 aa).

Residues 28–50 (LYLDLGFSALLFYNSNLLFSFIL) traverse the membrane as a helical segment.

The protein resides in the membrane. This is an uncharacterized protein from Archaeoglobus fulgidus (strain ATCC 49558 / DSM 4304 / JCM 9628 / NBRC 100126 / VC-16).